We begin with the raw amino-acid sequence, 381 residues long: MVNLELIEVQEGKAKILIPKAESIYDSPVFYNPRMALNRDIVVVLLNILNPKIVLDALSATGIRGIRFALETPAEEVWLNDISEDAYELMKRNVMLNFDGELRESKGRAILKGEKTIVINHDDANRLMAERHRYFHFIDLDPFGSPMEFLDTALRSAKRRGILGVTATDGAPLCGAHPRACLRKYLAVPLRGELCHEVGTRILVGVIARYAAKYDLGIDVILAYYKDHYFRAFVKLKDGARKGDETLEKLGYIYFDDKTGKFELEQGFLPTRPNAYGPVWLGPLKDEKIVSKMVKEAESLSLARKKQALKLLKMIDQELDIPLFYDTHAIGRRLKIETKKVEEIISALREQGYEATRTHFSPTGIKTSAPYEVFIETIKRI.

The Trm1 methyltransferase domain maps to 7–378 (IEVQEGKAKI…APYEVFIETI (372 aa)). The S-adenosyl-L-methionine site is built by arginine 39, arginine 64, aspartate 81, aspartate 123, and alanine 124.

The protein belongs to the class I-like SAM-binding methyltransferase superfamily. Trm1 family.

It catalyses the reaction guanosine(26) in tRNA + 2 S-adenosyl-L-methionine = N(2)-dimethylguanosine(26) in tRNA + 2 S-adenosyl-L-homocysteine + 2 H(+). Dimethylates a single guanine residue at position 26 of a number of tRNAs using S-adenosyl-L-methionine as donor of the methyl groups. The chain is tRNA (guanine(26)-N(2))-dimethyltransferase from Pyrococcus horikoshii (strain ATCC 700860 / DSM 12428 / JCM 9974 / NBRC 100139 / OT-3).